The chain runs to 159 residues: Ribosomal RNA large subunit methyltransferase H (159 aa).

Residues Leu76, Gly108, and 127 to 132 contribute to the S-adenosyl-L-methionine site; that span reads FSKMTF.

Belongs to the RNA methyltransferase RlmH family. As to quaternary structure, homodimer.

Its subcellular location is the cytoplasm. The catalysed reaction is pseudouridine(1915) in 23S rRNA + S-adenosyl-L-methionine = N(3)-methylpseudouridine(1915) in 23S rRNA + S-adenosyl-L-homocysteine + H(+). Specifically methylates the pseudouridine at position 1915 (m3Psi1915) in 23S rRNA. This chain is Ribosomal RNA large subunit methyltransferase H, found in Shouchella clausii (strain KSM-K16) (Alkalihalobacillus clausii).